Reading from the N-terminus, the 124-residue chain is U33-theraphotoxin-Cg1c (124 aa).

An N-terminal signal peptide occupies residues 1 to 17; it reads MKFAVAIAFTLLVCVFA. 5 cysteine pairs are disulfide-bonded: cysteine 26–cysteine 37, cysteine 31–cysteine 51, cysteine 36–cysteine 75, cysteine 61–cysteine 83, and cysteine 77–cysteine 94. The segment covering 93 to 108 has biased composition (basic and acidic residues); the sequence is RCQEESGKSDKSKESQ. Residues 93–124 are disordered; the sequence is RCQEESGKSDKSKESQGSDESEESEESKESSG. Residues 109-118 are compositionally biased toward acidic residues; that stretch reads GSDESEESEE.

The protein belongs to the neurotoxin 32 family. In terms of tissue distribution, expressed by the venom gland.

It localises to the secreted. This chain is U33-theraphotoxin-Cg1c, found in Chilobrachys guangxiensis (Chinese earth tiger tarantula).